Consider the following 571-residue polypeptide: Proline--tRNA ligase (571 aa).

This sequence belongs to the class-II aminoacyl-tRNA synthetase family. ProS type 1 subfamily. As to quaternary structure, homodimer.

It localises to the cytoplasm. It carries out the reaction tRNA(Pro) + L-proline + ATP = L-prolyl-tRNA(Pro) + AMP + diphosphate. Catalyzes the attachment of proline to tRNA(Pro) in a two-step reaction: proline is first activated by ATP to form Pro-AMP and then transferred to the acceptor end of tRNA(Pro). As ProRS can inadvertently accommodate and process non-cognate amino acids such as alanine and cysteine, to avoid such errors it has two additional distinct editing activities against alanine. One activity is designated as 'pretransfer' editing and involves the tRNA(Pro)-independent hydrolysis of activated Ala-AMP. The other activity is designated 'posttransfer' editing and involves deacylation of mischarged Ala-tRNA(Pro). The misacylated Cys-tRNA(Pro) is not edited by ProRS. The chain is Proline--tRNA ligase from Proteus mirabilis (strain HI4320).